Here is a 259-residue protein sequence, read N- to C-terminus: Leucine-rich repeat-containing protein 3B (259 aa).

The N-terminal stretch at 1 to 33 (MNLVDLWLSRSLSMCLLLQSFVLMILCFHSASM) is a signal peptide. Residues 34 to 64 (CPKGCLCSSSGGLNVTCSNANLKEIPRDLPP) enclose the LRRNT domain. N-linked (GlcNAc...) asparagine glycosylation occurs at Asn47. LRR repeat units lie at residues 65–86 (ETVL…IFKD), 89–110 (QLRV…AFKG), and 114–135 (TLQT…AFNN). Asn94 carries N-linked (GlcNAc...) asparagine glycosylation. Residues 145–197 (NPWHCDCTLQQVLRSMASNHETAHNVICKTSVLDEHAGRPFLNAANDADLCNL) form the LRRCT domain. The helical transmembrane segment at 205–225 (AMLVTMFGWFTMVISYVVYYV) threads the bilayer.

The protein belongs to the LRRC3 family.

It is found in the membrane. This is Leucine-rich repeat-containing protein 3B (Lrrc3b) from Mus musculus (Mouse).